The following is a 147-amino-acid chain: Large ribosomal subunit protein bL9 (147 aa).

The protein belongs to the bacterial ribosomal protein bL9 family.

Binds to the 23S rRNA. In Exiguobacterium sp. (strain ATCC BAA-1283 / AT1b), this protein is Large ribosomal subunit protein bL9.